A 313-amino-acid polypeptide reads, in one-letter code: Acetylglutamate kinase (313 aa).

Residues 84–85 (GG), arginine 106, and asparagine 210 contribute to the substrate site.

It belongs to the acetylglutamate kinase family. ArgB subfamily.

The protein localises to the cytoplasm. The catalysed reaction is N-acetyl-L-glutamate + ATP = N-acetyl-L-glutamyl 5-phosphate + ADP. The protein operates within amino-acid biosynthesis; L-arginine biosynthesis; N(2)-acetyl-L-ornithine from L-glutamate: step 2/4. In terms of biological role, catalyzes the ATP-dependent phosphorylation of N-acetyl-L-glutamate. The protein is Acetylglutamate kinase of Gluconacetobacter diazotrophicus (strain ATCC 49037 / DSM 5601 / CCUG 37298 / CIP 103539 / LMG 7603 / PAl5).